A 107-amino-acid chain; its full sequence is Ig kappa chain V-VI region XRPC 44 (107 aa).

The interval 1 to 23 (EIVLTQSPAITAASLGQKVTITC) is framework-1. A disulfide bridge connects residues C23 and C87. A complementarity-determining-1 region spans residues 24–33 (SASSSVSYMH). Residues 34–48 (WYQQKSGTSPKPWIY) form a framework-2 region. The interval 49–55 (EISKLAS) is complementarity-determining-2. The segment at 56–87 (GVPARFSGSGSGTSYSLTISSMEAEDAAIYYC) is framework-3. The complementarity-determining-3 stretch occupies residues 88 to 96 (QQWNYPLWT). The tract at residues 97–106 (FGGGTKLEIK) is framework-4.

This chain is Ig kappa chain V-VI region XRPC 44, found in Mus musculus (Mouse).